The primary structure comprises 384 residues: 2-deoxy-scyllo-inosose synthase (384 aa).

Residues Asp42, 73-76 (EVHK), 105-109 (GITGN), 129-130 (TT), 140-142 (SLK), and 151-152 (KN) each bind NAD(+). Residue Lys142 is part of the active site. Glu184 contacts Co(2+). Glu244 is an active-site residue. His247 and His263 together coordinate Co(2+).

The protein belongs to the sugar phosphate cyclases superfamily. DOI synthase family. The cofactor is NAD(+). Co(2+) is required as a cofactor.

It catalyses the reaction D-glucose 6-phosphate = 2-deoxy-L-scyllo-inosose + phosphate. The protein operates within metabolic intermediate biosynthesis; 2-deoxystreptamine biosynthesis; 2-deoxystreptamine from D-glucose 6-phosphate: step 1/4. Its pathway is antibiotic biosynthesis; lividomycin biosynthesis. Its function is as follows. Catalyzes the intramolecular carbocycle formation from D-glucose-6-phosphate to 2-deoxy-scyllo-inosose (DOI). This is 2-deoxy-scyllo-inosose synthase (livC) from Streptomyces lividus.